A 259-amino-acid chain; its full sequence is MTELQIAAQRALRLMDLTTLNDNDTDEKVIALCHQAKSPAGDTAAVCIYPRFIPIARKTLREQGTPDVRIATVTNFPHGNDDIEIALVETRAAIAYGADEVDVVFPYRALMAGNEQVGFDLVKACKEACAAANVLLKVIIETGELKDAALIRKASEISIKAGADFIKTSTGKVPVNATLESAELMMSVIRDMGVAKRVGFKPAGGVRTAEDAAQYLALADRLLGEGWADSRHFRFGASSLLASLLQTLGYDAKGTGSSY.

The active-site Proton donor/acceptor is the aspartate 102. Lysine 167 functions as the Schiff-base intermediate with acetaldehyde in the catalytic mechanism. The active-site Proton donor/acceptor is the lysine 201.

It belongs to the DeoC/FbaB aldolase family. DeoC type 2 subfamily.

Its subcellular location is the cytoplasm. The enzyme catalyses 2-deoxy-D-ribose 5-phosphate = D-glyceraldehyde 3-phosphate + acetaldehyde. It functions in the pathway carbohydrate degradation; 2-deoxy-D-ribose 1-phosphate degradation; D-glyceraldehyde 3-phosphate and acetaldehyde from 2-deoxy-alpha-D-ribose 1-phosphate: step 2/2. Catalyzes a reversible aldol reaction between acetaldehyde and D-glyceraldehyde 3-phosphate to generate 2-deoxy-D-ribose 5-phosphate. The sequence is that of Deoxyribose-phosphate aldolase from Edwardsiella ictaluri (strain 93-146).